The chain runs to 264 residues: Carbonic anhydrase (264 aa).

Positions 1 to 33 form a signal peptide, tat-type signal; the sequence is MSSTLYRRQLLKLLGMSVLGTSFSSCVTSPARA. One can recognise an Alpha-carbonic anhydrase domain in the interval 36–264; the sequence is VNWGYIGKVG…LNDRLVIEAI (229 aa). Residues His127, His129, and His146 each coordinate Zn(2+). 214–215 provides a ligand contact to substrate; the sequence is TT.

It belongs to the alpha-carbonic anhydrase family. Requires Zn(2+) as cofactor. In terms of processing, predicted to be exported by the Tat system. The position of the signal peptide cleavage has not been experimentally proven.

The enzyme catalyses hydrogencarbonate + H(+) = CO2 + H2O. Its function is as follows. Reversible hydration of carbon dioxide. This chain is Carbonic anhydrase (ecaA), found in Nostoc sp. (strain PCC 7120 / SAG 25.82 / UTEX 2576).